The primary structure comprises 88 residues: Small ribosomal subunit protein bS20 (88 aa).

The segment covering 1-12 has biased composition (basic residues); sequence MANHKSALKRAK. Residues 1–23 are disordered; the sequence is MANHKSALKRAKQNTIKQMRNRS.

The protein belongs to the bacterial ribosomal protein bS20 family.

Binds directly to 16S ribosomal RNA. The protein is Small ribosomal subunit protein bS20 of Desulfatibacillum aliphaticivorans.